A 412-amino-acid chain; its full sequence is Multidrug resistance protein MdtG (412 aa).

10 helical membrane-spanning segments follow: residues 20 to 40 (LFVAWIGCFLTGAAFSLIMPF), 62 to 82 (LVFSITFLFSAIASPFWGGLA), 96 to 116 (LGMSIVMVLMGFAQNIWQFLI), 119 to 139 (ALLGLLGGFVPNANALIATQI), 150 to 170 (TLSTGGVSGALLGPLVGGLLA), 177 to 197 (PVFFITASVLFLCFIMTLYFI), 225 to 245 (VLCLFVTTMIIQVATGSIAPI), 260 to 280 (LAFISGMIASVPGVAALMSAP), 294 to 314 (ILVAMMALSVLLLIPMALVQT), and 382 to 402 (TVFFVTAMVVLFNAGYSYWCL).

Belongs to the major facilitator superfamily. DHA1 family. MdtG (TC 2.A.1.2.20) subfamily.

The protein localises to the cell inner membrane. In Rahnella sp. (strain Y9602), this protein is Multidrug resistance protein MdtG.